The following is a 174-amino-acid chain: Shikimate kinase 2 (174 aa).

12–17 lines the ATP pocket; sequence GCGKTT. Mg(2+) contacts are provided by Thr-16 and Asp-32. Residues Asp-34, Arg-58, and Gly-79 each contribute to the substrate site. The tract at residues 112-126 is LID domain; the sequence is QAAPEEDLRPTLTGK. Arg-120 contacts ATP. Arg-139 contacts substrate.

It belongs to the shikimate kinase family. AroL subfamily. Monomer. Requires Mg(2+) as cofactor.

The protein localises to the cytoplasm. The catalysed reaction is shikimate + ATP = 3-phosphoshikimate + ADP + H(+). The protein operates within metabolic intermediate biosynthesis; chorismate biosynthesis; chorismate from D-erythrose 4-phosphate and phosphoenolpyruvate: step 5/7. Functionally, catalyzes the specific phosphorylation of the 3-hydroxyl group of shikimic acid using ATP as a cosubstrate. The polypeptide is Shikimate kinase 2 (Shigella boydii serotype 18 (strain CDC 3083-94 / BS512)).